The sequence spans 281 residues: NAD kinase (281 aa).

The Proton acceptor role is filled by Asp-66. NAD(+)-binding positions include 66–67 (DG), 137–138 (ND), Arg-148, Arg-165, Asp-167, and 178–183 (TAYSMS).

Belongs to the NAD kinase family. A divalent metal cation is required as a cofactor.

Its subcellular location is the cytoplasm. The catalysed reaction is NAD(+) + ATP = ADP + NADP(+) + H(+). Involved in the regulation of the intracellular balance of NAD and NADP, and is a key enzyme in the biosynthesis of NADP. Catalyzes specifically the phosphorylation on 2'-hydroxyl of the adenosine moiety of NAD to yield NADP. The polypeptide is NAD kinase (Chlorobium phaeovibrioides (strain DSM 265 / 1930) (Prosthecochloris vibrioformis (strain DSM 265))).